Consider the following 405-residue polypeptide: K(+)/H(+) antiporter subunit KhtU (405 aa).

Transmembrane regions (helical) follow at residues 3-23 (HLVFEVGTALVLVAIASVIAN), 29-49 (IIPFLIVLGMLVGPHAPKMGI), 60-80 (IIEFFGRMGVLFLLFYLGLEF), 85-105 (LIKSGKSIAVGGTIYILINFS), 108-128 (LLYGFITGFSFLEVLILAGVI), 153-173 (LILGIIMFEDIFLAVYLSVVS), 183-203 (VGSALLSILIAFGYMLLFFIA), 222-242 (VFIIVIFAALFFIAGFSETIH), 268-288 (LVVPFRDFFGAMFFFSFGLSI), 297-317 (VWLALGAVILTILGNFIAGMV), 332-352 (IGLTIVSRGEFSIIVANLGIA), and 357-377 (ATLKPFAALYVLILAILGPLV).

Belongs to the monovalent cation:proton antiporter 2 (CPA2) transporter (TC 2.A.37) family. The transporter is composed of the integral membrane protein KhtU and the regulatory protein KhtT.

It is found in the cell membrane. Its activity is regulated as follows. Potassium antiport activity requires the presence of KhtT. Activity is also modulated by KhtS. Has higher activity at alkaline pH. Functionally, potassium/proton antiporter that mediates the efflux of potassium ions from the cell. Can also mediate rubidium/proton antiport, but has no permeability for sodium or lithium ions. In the absence of KhtT, does not have antiport activity, but can catalyze potassium efflux. Involved in protection of the cell from methylglyoxal, a toxic by-product of glycolysis, via activation by S-lactoyl-BSH of the antiporter activity, leading to cytoplasmic acidification and methylglyoxal resistance. In Bacillus subtilis (strain 168), this protein is K(+)/H(+) antiporter subunit KhtU.